A 393-amino-acid polypeptide reads, in one-letter code: Xyloside xylosyltransferase 1 (393 aa).

Over 1–23 (MGLLRGGLPCARAMARLGAVRSH) the chain is Cytoplasmic. The helical; Signal-anchor for type II membrane protein transmembrane segment at 24 to 44 (YCALLLAAALAVCAFYYLGSG) threads the bilayer. Topologically, residues 45 to 393 (RETFSSATKR…GNCNTPIPED (349 aa)) are lumenal. 104-106 (MFT) provides a ligand contact to UDP-alpha-D-xylose. Mn(2+) is bound at residue Asp-226. UDP-alpha-D-xylose is bound at residue Leu-227. Asp-228 contributes to the Mn(2+) binding site. Residues 263-266 (HTFW) form an interaction with target proteins region. UDP-alpha-D-xylose is bound by residues Ser-290, Leu-328, and Gln-331. A glycoprotein is bound by residues Gln-331 and Trp-360. 2 disulfides stabilise this stretch: Cys-350–Cys-375 and Cys-357–Cys-386. His-383 lines the Mn(2+) pocket. Residue Asn-385 coordinates a glycoprotein.

The protein belongs to the glycosyltransferase 8 family. In terms of assembly, homodimer. Dimer formation may be essential for the retention in endoplasmic reticulum. Mg(2+) is required as a cofactor. It depends on Mn(2+) as a cofactor.

The protein localises to the endoplasmic reticulum membrane. It carries out the reaction 3-O-[alpha-D-xylosyl-(1-&gt;3)-beta-D-glucosyl]-L-seryl-[EGF-like domain protein] + UDP-alpha-D-xylose = 3-O-[alpha-D-xylosyl-(1-&gt;3)-alpha-D-xylosyl-(1-&gt;3)-beta-D-glucosyl]-L-seryl-[EGF-like domain protein] + UDP + H(+). In terms of biological role, alpha-1,3-xylosyltransferase, which elongates the O-linked xylose-glucose disaccharide attached to EGF-like repeats in the extracellular domain of target proteins by catalyzing the addition of the second xylose. Known targets include Notch proteins and coagulation factors, such as F9. The polypeptide is Xyloside xylosyltransferase 1 (XXYLT1) (Homo sapiens (Human)).